A 264-amino-acid polypeptide reads, in one-letter code: Spermidine/putrescine transport system permease protein PotC (264 aa).

Residues 1 to 7 (MIGRLLR) are Cytoplasmic-facing. The helical transmembrane segment at 8–27 (GGFMTAIYAYLYIPIIILIV) threads the bilayer. Residues 28–65 (NSFNSSRFGINWQGFTTKWYSLLMNNDSLLQAAQHSLT) are Periplasmic-facing. One can recognise an ABC transmembrane type-1 domain in the interval 60-248 (AQHSLTMAVF…VLSLVMVIAS (189 aa)). A helical membrane pass occupies residues 66–85 (MAVFSATFATLIGSLTAVAL). Over 86–100 (YRYRFRGKPFVSGML) the chain is Cytoplasmic. Residues 101-120 (FVVMMSPDIVMAISLLVLFM) traverse the membrane as a helical segment. Over 121 to 128 (LLGIQLGF) the chain is Periplasmic. A helical membrane pass occupies residues 129-148 (WSLLFSHITFCLPFVVVTVY). At 149-176 (SRLKGFDVRMLEAAKDLGASEFTILRKI) the chain is on the cytoplasmic side. The helical transmembrane segment at 177–196 (ILPLAMPAVAAGWVLSFTLS) threads the bilayer. Topologically, residues 197–231 (MDDVVVSSFVTGPSYEILPLKIYSMVKVGVSPEVN) are periplasmic. A helical membrane pass occupies residues 232 to 251 (ALATILLVLSLVMVIASQLI). Topologically, residues 252–264 (ARDKTKGNTGDVK) are cytoplasmic.

This sequence belongs to the binding-protein-dependent transport system permease family. CysTW subfamily.

The protein localises to the cell inner membrane. Required for the activity of the bacterial periplasmic transport system of putrescine and spermidine. The polypeptide is Spermidine/putrescine transport system permease protein PotC (potC) (Escherichia coli O157:H7).